Here is a 1480-residue protein sequence, read N- to C-terminus: DNA polymerase zeta catalytic subunit (1480 aa).

The interval 403-488 (DRSKFPKSPL…GDTRKAGKRL (86 aa)) is disordered. The segment covering 411–427 (PLNSSQEVTIHSSQDRQ) has biased composition (polar residues). Over residues 457 to 468 (TKREIEFCRDLP) the composition is skewed to basic and acidic residues. Positions 470 to 479 (RPTSSEPNQG) are enriched in polar residues. Residues C1381, C1384, C1400, and C1403 each coordinate Zn(2+). The CysA-type zinc-finger motif lies at 1381–1403 (CSSCLKNNIEIIPDKINSLCSDC). C1432, C1435, C1446, and C1451 together coordinate [4Fe-4S] cluster. A CysB motif motif is present at residues 1432–1451 (CRGCSKLSSSDPVLCKSNSC).

This sequence belongs to the DNA polymerase type-B family. In terms of assembly, forms DNA polymerase zeta with rev7. The cofactor is [4Fe-4S] cluster.

The protein resides in the mitochondrion. Its subcellular location is the nucleus. It carries out the reaction DNA(n) + a 2'-deoxyribonucleoside 5'-triphosphate = DNA(n+1) + diphosphate. Functionally, nonessential DNA polymerase. Required for DNA damage induced mutagenesis. Involved in DNA repair, mitochondrial DNA repair and translesion synthesis. Has a role in the bypass of abasic (AP) sites. In Schizosaccharomyces pombe (strain 972 / ATCC 24843) (Fission yeast), this protein is DNA polymerase zeta catalytic subunit (rev3).